The primary structure comprises 928 residues: MORC family CW-type zinc finger protein 4 (928 aa).

A CW-type zinc finger spans residues 417-469 (RIPDQTWVQCDECLKWRRLPGMVDPSTLPARWFCYYNPHPKFKRCSVPEEQER). Residues C426, C429, C450, and C461 each coordinate Zn(2+). Disordered stretches follow at residues 474-510 (LHRS…TPPL), 527-546 (NSPS…PRLK), 599-649 (AYPE…DQDQ), and 718-766 (RAES…LKRT). Residues 485 to 497 (AAEKKQKPMESDK) show a composition bias toward basic and acidic residues. Composition is skewed to basic and acidic residues over residues 626–636 (ESNKHTEENRE), 739–748 (KGKDCQDSRS), and 756–766 (TPKESEELKRT). A coiled-coil region spans residues 758–867 (KESEELKRTT…LEVLQKAQVS (110 aa)).

The protein resides in the nucleus. Functionally, histone methylation reader which binds to non-methylated (H3K4me0), monomethylated (H3K4me1), dimethylated (H3K4me2) and trimethylated (H3K4me3) 'Lys-4' on histone H3. The order of binding preference is H3K4me3 &gt; H3K4me2 &gt; H3K4me1 &gt; H3K4me0. The chain is MORC family CW-type zinc finger protein 4 (Morc4) from Mus musculus (Mouse).